The primary structure comprises 1534 residues: DNA-directed RNA polymerase subunit beta'' (1534 aa).

Residues Cys220, Cys296, Cys303, and Cys306 each contribute to the Zn(2+) site. Basic and acidic residues-rich tracts occupy residues 644–668 (RTQE…RTRE) and 678–688 (PENKYRTREGE). Disordered regions lie at residues 644-698 (RTQE…EDEY) and 719-800 (YRTL…KKEG). Acidic residues-rich tracts occupy residues 744–762 (GEYE…SSED) and 770–789 (TLEE…EYGS).

This sequence belongs to the RNA polymerase beta' chain family. RpoC2 subfamily. In plastids the minimal PEP RNA polymerase catalytic core is composed of four subunits: alpha, beta, beta', and beta''. When a (nuclear-encoded) sigma factor is associated with the core the holoenzyme is formed, which can initiate transcription. It depends on Zn(2+) as a cofactor.

It localises to the plastid. Its subcellular location is the chloroplast. It carries out the reaction RNA(n) + a ribonucleoside 5'-triphosphate = RNA(n+1) + diphosphate. In terms of biological role, DNA-dependent RNA polymerase catalyzes the transcription of DNA into RNA using the four ribonucleoside triphosphates as substrates. The sequence is that of DNA-directed RNA polymerase subunit beta'' from Saccharum hybrid (Sugarcane).